The chain runs to 350 residues: MMQTCCIHQSFCFPHRVFPRFDASIGIKPPKLCQVGFIGKTQSYGISSPIRQRRLYVNLNANDGHPSMSMLEEETSTENNAPSQEAELPFSKWSPSKYIWRGLSVPIIAGQVVLRILKGKIHWRNTLQQLERTGPKSLGVCLLTSTFVGMAFTIQFVREFTRLGLNRSIGGVLALAFSRELSPVITSIVVAGRMGSAFAAELGTMQVSEQTDTLRVLGADPIDYLITPRVIASCLALPFLTLMCFTVGMASSALLSDAVYGISINIIMDSAHRALRPWDIVSAMIKSQVFGAIISVISCSWGVTTTGGAKGVGESTTSAVVMSLVGIFIADFVLSSFFFQGAGDSLKNCV.

The disordered stretch occupies residues 67-86 (SMSMLEEETSTENNAPSQEA). The helical transmembrane segment at 98–117 (YIWRGLSVPIIAGQVVLRIL) threads the bilayer. The Stromal portion of the chain corresponds to 118-136 (KGKIHWRNTLQQLERTGPK). A helical membrane pass occupies residues 137–157 (SLGVCLLTSTFVGMAFTIQFV). At 158 to 168 (REFTRLGLNRS) the chain is on the chloroplast intermembrane side. A helical transmembrane segment spans residues 169 to 189 (IGGVLALAFSRELSPVITSIV). The Stromal segment spans residues 190 to 229 (VAGRMGSAFAAELGTMQVSEQTDTLRVLGADPIDYLITPR). The helical transmembrane segment at 230–250 (VIASCLALPFLTLMCFTVGMA) threads the bilayer. Residues 251 to 288 (SSALLSDAVYGISINIIMDSAHRALRPWDIVSAMIKSQ) lie on the Chloroplast intermembrane side of the membrane. A helical transmembrane segment spans residues 289-309 (VFGAIISVISCSWGVTTTGGA). At 310–318 (KGVGESTTS) the chain is on the stromal side. A helical membrane pass occupies residues 319–339 (AVVMSLVGIFIADFVLSSFFF). Over 340–350 (QGAGDSLKNCV) the chain is Chloroplast intermembrane.

Belongs to the MlaE permease family. As to quaternary structure, permease subunit of the TGD complex, a lipid translocator at the inner chloroplast envelope membrane made of TGD1, TGD2 and TGD3. Interacts with TGD2 and TGD3 with an overall subunit stoichiometry of 2 TGD1, 2 TGD3 and 8 to 12 TGD2. Interacts with TGD5. High levels in green tissues, but low levels in nongreen tissues such as roots.

It localises to the plastid. It is found in the chloroplast inner membrane. Functionally, required during embryogenesis. Permease involved in lipid transfer from the endoplasmic reticulum (ER) to plastids, and necessary for thylakoids formation. This chain is Protein TRIGALACTOSYLDIACYLGLYCEROL 1, chloroplastic, found in Arabidopsis thaliana (Mouse-ear cress).